The chain runs to 1529 residues: MDKNNNNNNSNGGHENLFKDLQNQKRVQNPSFSSGQSRTVPSISARGVAPISSSSSSSSISTTNNTTTTTTSGTGSTSSPVSKGVPLIPIGASRFKQQPSTDVWRSARGQQLSESLWSSFKQALQNSQNSQQSLSQSLSQSHSTNSEINNILLEFVKHYNSEYDKWNVEMGVDYANTKVYGIKLYCTPVLDIQTTLYLTRQLCSYVLNLSKALTDDNLDIPDGLHFICLINILSRSPLNSTLLHQENALAHPFQAARLASYKLSSFRDKNNPSFTKWWPYLKVLLANCCQIATNFVHDKQNLSFNSLRYGNVNNNNNSNNNNNIVNSTSLSSGSLLSNGGGISTSEPEISPSTSPLTGTTPTSPSSSWSSSSITNHQIQHQILMQQQQQQQAQQQHTQQYFNTIGQSSSYSYTNVINGVSTNNSTITATTTSNFLIQHIFKLGTISILMDSLQFFNDFFKTLQPKDSEDSFRLLIIDTLGILISGNGGLTTTTTTTTTTTTTTATSTNTTPNTIINNTTINNSGLTNSINNNNGGNNNLNKLKEPGNEIKTIINCIGMKAYIKTSKKVTSLQNEFQFQLHVIRVIKELISNNLNNAKYFNSHRGFEKIQEVILWVTQCFKPTDSHTFTDESCLDFDTSMPAQELSALLIGATSSNSSNNLPNLTNSISSPSHSSSSSSSTTTNINNSNNNTATATTTTSNVIIPPTMYDSLNSVLNSLKYTTYSEKSSSLIKSPPIIVKRSKVVQLSQLFQVLHSFSFTLVPFSKIQTNSSSSSGNLNYNIYSSSSASFINNNNNNNNCNISSPTNQSVNNNNNNNNNNNNNNNNNNNNNNNNVLPRSNSSYSIFRRGDSLNTIIDINQDNNNSNSNSNNSSTLDILNNSQDTIVDNNNGSNIDFEATITTNTTTVVTATVNLTNNNNNNNNNNNNMIDGNTEVTGGSAHNSWSSYTNINEQFQQLSLTSSTTATGSSPTSPTAFQYQSKPIDKMFVNTLLIETIFEKLFSQLNLSALNENHSTTSSLPISQNLSDDSSNTNTNNNNTSFGKIYISDNLQQNPNTDKSLSCGKIFNKIKNSTPELQLQIIEYLIKLVIENPYCLPILRRFNLWELIFSDNFYYSSPQATLNDDDIEYLLNSTTTTTTSSSTNISEEQLKKRKLYLFNGLRLGCLGLIQFFSTFNNRDNFEEICIILTEMRKSLLKSPASVIELCQLLINITKSNPQGTIQSLIKLRIFQQIPQMIQVLFKYEQASNSQFGLLHKKARNIIFSYLGQLIVHEELSYHAVVEKELIDVLFLLLRKVETKTFSITQIFFLMKLNVSSSSPSVTTLLSSSSQVLNSYQQQQQQPQQQSSQPQQQSSQPQQIPQSQLQQQNQTQSLQSSSLSSTSLLLTSQHQQPSTSLLSTSQFSSSSSLLQQQQQQQQQQQQQQQQQQQQQQQQQQQQPQLLQQTQQQQQQQQQQQQQQVQTPSSPQTLASLLGNSSSNTLTSSSSTLSLNESSTLSRLPTSNNLSELYRTYISELSMIKEETSCTYDFKFD.

Over residues 1 to 11 (MDKNNNNNNSN) the composition is skewed to low complexity. 7 disordered regions span residues 1–85 (MDKN…SKGV), 335–371 (LLSN…WSSS), 660–694 (LPNL…TATA), 798–843 (NCNI…SSYS), 1016–1035 (SSLP…NTNN), 1334–1364 (QQQQ…QLQQ), and 1454–1497 (QQQV…SRLP). Positions 24-42 (QKRVQNPSFSSGQSRTVPS) are enriched in polar residues. The span at 51 to 79 (ISSSSSSSSISTTNNTTTTTTSGTGSTSS) shows a compositional bias: low complexity. The segment covering 810 to 833 (NNNNNNNNNNNNNNNNNNNNNNNN) has biased composition (low complexity). Polar residues-rich tracts occupy residues 834–843 (VLPRSNSSYS) and 1016–1027 (SSLPISQNLSDD). A compositionally biased stretch (low complexity) spans 1454–1494 (QQQVQTPSSPQTLASLLGNSSSNTLTSSSSTLSLNESSTLS).

This is an uncharacterized protein from Dictyostelium discoideum (Social amoeba).